The following is a 492-amino-acid chain: Ketol-acid reductoisomerase (NADP(+)) (492 aa).

One can recognise a KARI N-terminal Rossmann domain in the interval 15–208 (AQLGKCRFMA…GGDRAGVLES (194 aa)). NADP(+) contacts are provided by residues 45–48 (CGAQ), Arg-68, Arg-76, Ser-78, and 108–110 (DKQ). Residue His-132 is part of the active site. Gly-158 contributes to the NADP(+) binding site. KARI C-terminal knotted domains are found at residues 209–344 (SFVA…KAPP) and 345–485 (FEGK…MTDM). 4 residues coordinate Mg(2+): Asp-217, Glu-221, Glu-389, and Glu-393. Residue Ser-414 participates in substrate binding.

The protein belongs to the ketol-acid reductoisomerase family. Mg(2+) is required as a cofactor.

It carries out the reaction (2R)-2,3-dihydroxy-3-methylbutanoate + NADP(+) = (2S)-2-acetolactate + NADPH + H(+). The enzyme catalyses (2R,3R)-2,3-dihydroxy-3-methylpentanoate + NADP(+) = (S)-2-ethyl-2-hydroxy-3-oxobutanoate + NADPH + H(+). It participates in amino-acid biosynthesis; L-isoleucine biosynthesis; L-isoleucine from 2-oxobutanoate: step 2/4. Its pathway is amino-acid biosynthesis; L-valine biosynthesis; L-valine from pyruvate: step 2/4. Its function is as follows. Involved in the biosynthesis of branched-chain amino acids (BCAA). Catalyzes an alkyl-migration followed by a ketol-acid reduction of (S)-2-acetolactate (S2AL) to yield (R)-2,3-dihydroxy-isovalerate. In the isomerase reaction, S2AL is rearranged via a Mg-dependent methyl migration to produce 3-hydroxy-3-methyl-2-ketobutyrate (HMKB). In the reductase reaction, this 2-ketoacid undergoes a metal-dependent reduction by NADPH to yield (R)-2,3-dihydroxy-isovalerate. The polypeptide is Ketol-acid reductoisomerase (NADP(+)) (Edwardsiella ictaluri (strain 93-146)).